The primary structure comprises 254 residues: Major prion protein (254 aa).

A signal peptide spans 1 to 22 (MANLSYWLLALFVATWTDVGLC). Positions 23–231 (KKRPKPGGWN…SQAYYDGRRS (209 aa)) are interaction with GRB2, ERI3 and SYN1. The interval 25–108 (RPKPGGWNTG…WNKPNKPKTS (84 aa)) is disordered. Tandem repeats lie at residues 51–59 (PQGGGTWGQ), 60–67 (PHGGGWGQ), 68–75 (PHGGGWGQ), 76–83 (PHGGGWGQ), and 84–91 (PHGGGWGQ). The 5 X 8 AA tandem repeats of P-H-G-G-G-W-G-Q stretch occupies residues 51–91 (PQGGGTWGQPHGGGWGQPHGGGWGQPHGGGWGQPHGGGWGQ). Residues 52-95 (QGGGTWGQPHGGGWGQPHGGGWGQPHGGGWGQPHGGGWGQGGGT) are compositionally biased toward gly residues. Cu(2+)-binding residues include His-61, Gly-62, Gly-63, His-69, Gly-70, Gly-71, His-77, Gly-78, Gly-79, His-85, Gly-86, and Gly-87. The segment at 90–231 (GQGGGTHNQW…SQAYYDGRRS (142 aa)) is prP27-30 (protease resistant core). Cys-179 and Cys-214 form a disulfide bridge. N-linked (GlcNAc...) asparagine glycans are attached at residues Asn-181 and Asn-197. A lipid anchor (GPI-anchor amidated serine) is attached at Ser-231. A propeptide spans 232 to 254 (SAVLFSSPPVILLISFLIFLIVG) (removed in mature form).

This sequence belongs to the prion family. As to quaternary structure, monomer and homodimer. Has a tendency to aggregate into amyloid fibrils containing a cross-beta spine, formed by a steric zipper of superposed beta-strands. Soluble oligomers may represent an intermediate stage on the path to fibril formation. Copper binding may promote oligomerization. Interacts with GRB2, APP, ERI3/PRNPIP and SYN1. Mislocalized cytosolically exposed PrP interacts with MGRN1; this interaction alters MGRN1 subcellular location and causes lysosomal enlargement. Interacts with KIAA1191.

It is found in the cell membrane. Its subcellular location is the golgi apparatus. In terms of biological role, its primary physiological function is unclear. Has cytoprotective activity against internal or environmental stresses. May play a role in neuronal development and synaptic plasticity. May be required for neuronal myelin sheath maintenance. May play a role in iron uptake and iron homeostasis. Soluble oligomers are toxic to cultured neuroblastoma cells and induce apoptosis (in vitro). Association with GPC1 (via its heparan sulfate chains) targets PRNP to lipid rafts. Also provides Cu(2+) or Zn(2+) for the ascorbate-mediated GPC1 deaminase degradation of its heparan sulfate side chains. This Nothocricetulus migratorius (Gray dwarf hamster) protein is Major prion protein (PRNP).